A 213-amino-acid polypeptide reads, in one-letter code: Cell division protein SepF (213 aa).

A disordered region spans residues 27 to 103 (VDAPAPRRAP…GSLRGSAPTR (77 aa)). 2 stretches are compositionally biased toward basic and acidic residues: residues 35-51 (APVE…RFAD) and 72-90 (DEDR…DRPA).

The protein belongs to the SepF family. As to quaternary structure, homodimer. Interacts with FtsZ.

The protein resides in the cytoplasm. Functionally, cell division protein that is part of the divisome complex and is recruited early to the Z-ring. Probably stimulates Z-ring formation, perhaps through the cross-linking of FtsZ protofilaments. Its function overlaps with FtsA. The polypeptide is Cell division protein SepF (Mycobacteroides abscessus (strain ATCC 19977 / DSM 44196 / CCUG 20993 / CIP 104536 / JCM 13569 / NCTC 13031 / TMC 1543 / L948) (Mycobacterium abscessus)).